The primary structure comprises 1363 residues: DNA-directed RNA polymerase subunit beta' (1363 aa).

Positions 1 to 39 (MTSTPSKSRKSSKGSKAAKAAASAPETRPLAKTPPPFRN) are disordered. The segment covering 14–24 (GSKAAKAAASA) has biased composition (low complexity). Zn(2+) is bound by residues Cys248, Cys315, Cys322, and Cys325.

This sequence belongs to the RNA polymerase beta' chain family. RpoC2 subfamily. In terms of assembly, in cyanobacteria the RNAP catalytic core is composed of 2 alpha, 1 beta, 1 beta', 1 gamma and 1 omega subunit. When a sigma factor is associated with the core the holoenzyme is formed, which can initiate transcription. Zn(2+) is required as a cofactor.

It carries out the reaction RNA(n) + a ribonucleoside 5'-triphosphate = RNA(n+1) + diphosphate. DNA-dependent RNA polymerase catalyzes the transcription of DNA into RNA using the four ribonucleoside triphosphates as substrates. The protein is DNA-directed RNA polymerase subunit beta' of Synechococcus sp. (strain WH7803).